Consider the following 237-residue polypeptide: MRKVSLALSAACLLFTLNYTASALASSPSPLNPGTNVAKLAEQAPVHWVSVAQIEKSLTGRPPMAVGFDIDDTVLFSSPGFWRGKKMYSPDSEEYLKNPAFWEKMNNGWDEFSIPKEVARQLIALHLRRGDSIFFVTGRSQTSNERVSKTLADDFLIPATVMNPVIFAGDKPGQNSKIQWLQAKNIRIFYGDSDNDIAAARELGIRGIRILRASNSTYKPLPQAGAFGEEVIVNSEY.

Positions 1–25 (MRKVSLALSAACLLFTLNYTASALA) are cleaved as a signal peptide. The Nucleophile role is filled by Asp-69. Residues Asp-69 and Asp-71 each contribute to the Mg(2+) site. The active-site Proton donor is the Asp-71. Substrate is bound by residues 137–138 (TG) and Lys-177. Asp-192 serves as a coordination point for Mg(2+).

This sequence belongs to the class B bacterial acid phosphatase family. As to quaternary structure, homotetramer. Mg(2+) serves as cofactor.

Its subcellular location is the periplasm. The enzyme catalyses a phosphate monoester + H2O = an alcohol + phosphate. Functionally, dephosphorylates several organic phosphate monoesters. Also has a phosphotransferase activity catalyzing the transfer of low-energy phosphate groups from organic phosphate monoesters to free hydroxyl groups of various organic compounds. This chain is Class B acid phosphatase, found in Citrobacter rodentium (strain ICC168) (Citrobacter freundii biotype 4280).